The chain runs to 284 residues: MTTAHFYCQYCTASLLGKKYVLKDDSPYCVTCYDRVFSNYCEECKKPIESDSKDLCYKDRHWHEGCFKCTKCNHSLVEKPFAAKDERLLCTECYSNECSSKCFHCKRTIMPGSRKMEFKGNYWHETCFVCENCRQPIGTKPLISKESGNYCVPCFEKEFAHYCNFCKKVITSGGITFCDQLWHKECFLCSGCRKDLCEEQFMSRDDYPFCVDCYNHLYANKCVACSKPISGLTGAKFICFQDSQWHSECFNCGKCSVSLVGKGFLTQNKEIFCQKCGSGMDTDI.

The segment at 8 to 32 adopts a C4-type zinc-finger fold; sequence CQYCTASLLGKKYVLKDDSPYCVTC. 4 LIM zinc-binding domains span residues 39-100, 101-160, 161-220, and 223-283; these read NYCE…ECSS, KCFH…KEFA, HYCN…LYAN, and VACS…MDTD.

As to quaternary structure, interacts with CREM (via the third LIM domain). Interacts (via second LIM domain) with SPAG8. In terms of tissue distribution, testis-specific (at protein level).

The protein localises to the nucleus. In terms of biological role, may be involved in the regulation of spermatogenesis. Stimulates CREM transcriptional activity in a phosphorylation-independent manner. The protein is Four and a half LIM domains protein 5 (FHL5) of Homo sapiens (Human).